The sequence spans 720 residues: Engulfment and cell motility protein 3 (720 aa).

One can recognise an ELMO domain in the interval 307-479; sequence EQREQLQVLR…VVREQLARTL (173 aa). One can recognise a PH domain in the interval 542–664; sequence RLCEGTLFRK…TDGLSALLGS (123 aa). The short motif at 696–706 is the SH3-binding element; it reads PERPPPVPPPP.

In terms of assembly, probably interacts directly with the SH3-domain of DOCK1 via its SH3-binding site. Part of a complex with DOCK1 and RAC1. Interacts with ADGRB3.

The protein localises to the cytoplasm. Functionally, involved in cytoskeletal rearrangements required for phagocytosis of apoptotic cells and cell motility. Acts in association with DOCK1 and CRK. Was initially proposed to be required in complex with DOCK1 to activate Rac Rho small GTPases. May enhance the guanine nucleotide exchange factor (GEF) activity of DOCK1. This chain is Engulfment and cell motility protein 3 (ELMO3), found in Homo sapiens (Human).